We begin with the raw amino-acid sequence, 561 residues long: Melanopsin-A (561 aa).

Residues 1-34 (MRPSTDTMEADTAATHRNFITKVDVPDHAHYTVA) lie on the Extracellular side of the membrane. Residues 35-55 (FFVSVIGTLGVTGNALVQFAF) form a helical membrane-spanning segment. Topologically, residues 56–68 (YSNKKLRNLPNYF) are cytoplasmic. A helical membrane pass occupies residues 69 to 89 (IMNQAASDFLMAFTQSPFFFI). The Extracellular portion of the chain corresponds to 90-104 (NCLNREWIFGELGCK). C103 and C181 are joined by a disulfide. Residues 105-125 (LYAFLGALFGITSMINLLAIS) form a helical membrane-spanning segment. Residues 126–148 (LDRYMVITRPLEAMKWNSKRRTT) lie on the Cytoplasmic side of the membrane. Residues 149 to 169 (IAILLVWLYSLAWSLAPLVGW) traverse the membrane as a helical segment. Residues 170 to 201 (SSYIPEGLRTSCTWDYVTYTASNRSYTMMLCC) lie on the Extracellular side of the membrane. A glycan (N-linked (GlcNAc...) asparagine) is linked at N192. Residues 202 to 222 (FVFFIPLAIISYCYLFMFLAI) traverse the membrane as a helical segment. Residues 223–255 (RKTSRDVERLGIQVRKSTIIRQKSIRTEWKLAK) lie on the Cytoplasmic side of the membrane. The helical transmembrane segment at 256 to 276 (IAFVVIVVYVLSWSPYACVTM) threads the bilayer. Residues 277–291 (ISWSGHANILSPYSK) are Extracellular-facing. The chain crosses the membrane as a helical span at residues 292–312 (TVPAVIAKASTIYNPFIYAII). K299 is modified (N6-(retinylidene)lysine). Residues 313 to 561 (HQKYRKTLAD…EDSLEDNDVV (249 aa)) lie on the Cytoplasmic side of the membrane. 4 disordered regions span residues 359-385 (AIRR…SYSS), 404-448 (ASFR…SATH), 479-503 (NGLS…SKSA), and 539-561 (SFTD…NDVV). Over residues 371–385 (ASASKTAAGASSYSS) the composition is skewed to low complexity. Positions 550 to 561 (VDEDSLEDNDVV) are enriched in acidic residues.

The protein belongs to the G-protein coupled receptor 1 family. Opsin subfamily. Expressed in retina and brain. Expressed in a subset of retinal horizontal cells as well as a small number of amacrine and retinal ganglion cells. Also expressed in a small population of neurons in the suprachiasmatic nucleus (SNC).

It is found in the cell membrane. In terms of biological role, photoreceptor implicated in non-image-forming responses to light. This Gadus morhua (Atlantic cod) protein is Melanopsin-A (opn4a).